The primary structure comprises 453 residues: Allantoinase (453 aa).

Residues H59, H61, K146, H186, H242, and D315 each coordinate Zn(2+). K146 is subject to N6-carboxylysine.

The protein belongs to the metallo-dependent hydrolases superfamily. Allantoinase family. As to quaternary structure, homotetramer. It depends on Zn(2+) as a cofactor. In terms of processing, carboxylation allows a single lysine to coordinate two zinc ions.

It carries out the reaction (S)-allantoin + H2O = allantoate + H(+). It participates in nitrogen metabolism; (S)-allantoin degradation; allantoate from (S)-allantoin: step 1/1. Its function is as follows. Catalyzes the conversion of allantoin (5-ureidohydantoin) to allantoic acid by hydrolytic cleavage of the five-member hydantoin ring. This is Allantoinase from Escherichia coli O9:H4 (strain HS).